The sequence spans 294 residues: Secreted frizzled-related protein 2 (294 aa).

Positions 1 to 24 (MPRGPGSLLLLVLASHCCLGSARG) are cleaved as a signal peptide. The FZ domain occupies 34–154 (YKRSNCKPIP…PQDNDLCIPL (121 aa)). Cystine bridges form between Cys39-Cys102, Cys49-Cys95, Cys86-Cys124, Cys113-Cys151, Cys117-Cys141, Cys171-Cys244, Cys174-Cys246, and Cys189-Cys294. The NTR domain maps to 171-294 (CEACKNKNED…ISRSIRKLQC (124 aa)).

Belongs to the secreted frizzled-related protein (sFRP) family.

It is found in the secreted. Functionally, soluble frizzled-related proteins (sFRPS) function as modulators of Wnt signaling through direct interaction with Wnts. They have a role in regulating cell growth and differentiation in specific cell types. SFRP2 may be important for eye retinal development and for myogenesis. In Canis lupus familiaris (Dog), this protein is Secreted frizzled-related protein 2 (SFRP2).